The primary structure comprises 329 residues: Phenylalanine--tRNA ligase alpha subunit (329 aa).

This sequence belongs to the class-II aminoacyl-tRNA synthetase family. Phe-tRNA synthetase alpha subunit type 1 subfamily. In terms of assembly, tetramer of two alpha and two beta subunits. Requires Mg(2+) as cofactor.

The protein resides in the cytoplasm. It catalyses the reaction tRNA(Phe) + L-phenylalanine + ATP = L-phenylalanyl-tRNA(Phe) + AMP + diphosphate + H(+). This Buchnera aphidicola subsp. Schizaphis graminum (strain Sg) protein is Phenylalanine--tRNA ligase alpha subunit (pheS).